Reading from the N-terminus, the 256-residue chain is Capsid protein (256 aa).

Residues 3–20 (KRPADIIISTPGSKVRRR) carry the Bipartite nuclear localization signal motif. Positions 40 to 54 (KRQSWTNRPINRKPR) match the Nuclear localization signal motif. Residues 68-85 (CEGPCKVQSFESRHDVVH) fold into a zinc finger. Positions 101–122 (LTHRVGKRFCVKSIYILGKIWM) match the Nuclear export signal motif. The short motif at 200-247 (RRFFRVNNYVVYNQQEAGKYENHTENALMLYMACTHASNPVYATLKIR) is the Bipartite nuclear localization signal element.

Belongs to the geminiviridae capsid protein family. In terms of assembly, homomultimer. Binds to single-stranded and double-stranded viral DNA. Interacts (via nuclear localization signals) with host importin alpha-1a.

It localises to the virion. The protein resides in the host nucleus. Functionally, encapsidates the viral DNA into characteristic twinned ('geminate') particles. Binds the genomic viral ssDNA and shuttles it into and out of the cell nucleus. The CP of bipartite geminiviruses is not required for cell-to-cell or systemic movement. This chain is Capsid protein, found in Manihot esculenta (Cassava).